The following is a 537-amino-acid chain: 2-succinyl-5-enolpyruvyl-6-hydroxy-3-cyclohexene-1-carboxylate synthase (537 aa).

The protein belongs to the TPP enzyme family. MenD subfamily. In terms of assembly, homodimer. The cofactor is Mg(2+). Requires Mn(2+) as cofactor. Thiamine diphosphate is required as a cofactor.

It catalyses the reaction isochorismate + 2-oxoglutarate + H(+) = 5-enolpyruvoyl-6-hydroxy-2-succinyl-cyclohex-3-ene-1-carboxylate + CO2. It functions in the pathway quinol/quinone metabolism; 1,4-dihydroxy-2-naphthoate biosynthesis; 1,4-dihydroxy-2-naphthoate from chorismate: step 2/7. The protein operates within quinol/quinone metabolism; menaquinone biosynthesis. Functionally, catalyzes the thiamine diphosphate-dependent decarboxylation of 2-oxoglutarate and the subsequent addition of the resulting succinic semialdehyde-thiamine pyrophosphate anion to isochorismate to yield 2-succinyl-5-enolpyruvyl-6-hydroxy-3-cyclohexene-1-carboxylate (SEPHCHC). This is 2-succinyl-5-enolpyruvyl-6-hydroxy-3-cyclohexene-1-carboxylate synthase from Nocardioides sp. (strain ATCC BAA-499 / JS614).